We begin with the raw amino-acid sequence, 397 residues long: MYGLEMLEKIKLEYDKWACLTPKNSLYDRTLVWLFLSLLMIGFIMVTSASIPVSTRLNNDPFHFAIRDSIYLACSLLAFAFVVKIPMRNWEKYNVPLFLLSLLFLASVLIFGRSVNGSIRWIQLGPINFQPAELSKLAIICYFSSFYVRKYDEMRNRSASVIRPMVILFLFSSLLLLQPDLGSVVVLFVLTFTMLFIMGAKVMQFLLLIVTASVSFILLVLTSEYRLKRVTSFLDPFADAYGDGFQLSNAQMAFGQGQLWGQGLGNSVQKLEYLPEAHTDFVMAVVAEEFGFIGIIFMVVLLLCLSFRAIKISRDALKLEARFRGFFAFGVAIWVFLQGSVNLGVASGALPTKGLTFPLVSYGGSSLVIMSVAIAILLRIDYENRLTRVGHAQIKEP.

Topologically, residues methionine 1–threonine 30 are cytoplasmic. Residues leucine 31 to isoleucine 51 form a helical membrane-spanning segment. The Periplasmic portion of the chain corresponds to proline 52–proline 61. The chain crosses the membrane as a helical span at residues phenylalanine 62 to valine 82. The Cytoplasmic portion of the chain corresponds to valine 83–asparagine 94. The helical transmembrane segment at valine 95–valine 115 threads the bilayer. Residues asparagine 116 to proline 126 lie on the Periplasmic side of the membrane. Residues isoleucine 127–phenylalanine 146 form a helical membrane-spanning segment. Residues tyrosine 147–serine 158 are Cytoplasmic-facing. 2 helical membrane passes run alanine 159–proline 179 and aspartate 180–alanine 200. Position 201 (lysine 201) is a topological domain, cytoplasmic. A helical transmembrane segment spans residues valine 202 to threonine 222. Topologically, residues serine 223–aspartate 280 are periplasmic. Residues phenylalanine 281 to leucine 301 form a helical membrane-spanning segment. Over leucine 302–glycine 325 the chain is Cytoplasmic. Residues phenylalanine 326 to alanine 346 form a helical membrane-spanning segment. Residues serine 347–threonine 356 are Periplasmic-facing. Residues phenylalanine 357–leucine 377 form a helical membrane-spanning segment. At leucine 378 to proline 397 the chain is on the cytoplasmic side.

This sequence belongs to the SEDS family. FtsW subfamily.

The protein localises to the cell inner membrane. It catalyses the reaction [GlcNAc-(1-&gt;4)-Mur2Ac(oyl-L-Ala-gamma-D-Glu-L-Lys-D-Ala-D-Ala)](n)-di-trans,octa-cis-undecaprenyl diphosphate + beta-D-GlcNAc-(1-&gt;4)-Mur2Ac(oyl-L-Ala-gamma-D-Glu-L-Lys-D-Ala-D-Ala)-di-trans,octa-cis-undecaprenyl diphosphate = [GlcNAc-(1-&gt;4)-Mur2Ac(oyl-L-Ala-gamma-D-Glu-L-Lys-D-Ala-D-Ala)](n+1)-di-trans,octa-cis-undecaprenyl diphosphate + di-trans,octa-cis-undecaprenyl diphosphate + H(+). It participates in cell wall biogenesis; peptidoglycan biosynthesis. Peptidoglycan polymerase that is essential for cell division. This Haemophilus ducreyi (strain 35000HP / ATCC 700724) protein is Probable peptidoglycan glycosyltransferase FtsW.